The primary structure comprises 460 residues: Mogroside I-E synthase (460 aa).

The active-site Proton acceptor is the histidine 25. The Charge relay role is filled by aspartate 114. UDP-alpha-D-glucose-binding residues include serine 286, cysteine 339, glutamine 341, tryptophan 359, asparagine 360, serine 361, glutamate 364, aspartate 380, and glutamine 381.

Belongs to the UDP-glycosyltransferase family. Highly expressed in young fruits 15 days after anthesis (15-DAA).

It catalyses the reaction mogrol + UDP-alpha-D-glucose = mogroside IE + UDP + H(+). It carries out the reaction mogroside I-A1 + UDP-alpha-D-glucose = mogroside IIE + UDP + H(+). The enzyme catalyses mogroside II-A1 + UDP-alpha-D-glucose = mogroside IIIX + UDP + H(+). The catalysed reaction is mogroside II-A + UDP-alpha-D-glucose = mogroside III + UDP + H(+). It catalyses the reaction mogroside III-A1 + UDP-alpha-D-glucose = siamenoside I + UDP + H(+). It functions in the pathway secondary metabolite biosynthesis; terpenoid biosynthesis. Functionally, UDP-glycosyltransferase involved in the biosynthesis of cucurbitacin and mogroside tetracyclic triterpene natural products (e.g. siamenoside I and mogrosides IV, V and VI). Cucurbitacins have cytotoxic properties and exhibit deterrent taste as a defense barrier against herbivores. Mogrosides are nonsugar highly oxygenated compounds used as high-intensity zero-calorie sweeteners; they also possess pharmacological properties such as regulating immunity, lowering blood sugar and lipid levels, protecting the liver, and acting as antioxidants and antitumor agents. Catalyzes the C3 primary glucosylation of mogrol, mogroside I-A1, mogroside II-A1, mogroside II-A and mogroside III-A1. This Siraitia grosvenorii (Monk's fruit) protein is Mogroside I-E synthase.